The sequence spans 409 residues: MFVQEEKIFAGKVLRLHICAADGAEWLEEATEDTSVEKLKESCLKHGAHGSLEDPKNVTHHKLIHAASERVLSDSKTILEENIQDQDVLLLIKKRVPSPLPKMADVSAEEKKKQEQKAPDKDAILRATANLPACSTDRTAVQTTMRDFQTELRKILVSLIEVAQKLLALNPDAVELFKKANAMLDEDEDERVDETALRQLTEMGFPESRASKALRLNHMSVPQAMEWLIEHSEDPAIDTPLPGHAAQAGASAAATTSSTSSEAAVGTSVEDEESRDELTEIFKKIRRKKEFRADARAVISLMEMGFDEKEVIDALRVNNNQQNAACEWLLGDRKPSPEELDQGIDPNSPLFQAILDNPVVQLGLTNPKTLLAFEDMLENPLNSTQWMNDPETGPVMLQISRIFQTLNRT.

Residue Met-1 is modified to N-acetylmethionine. The Ubiquitin-like domain occupies 14–98 (LRLHICAADG…LLLIKKRVPS (85 aa)). Residues 101-122 (PKMADVSAEEKKKQEQKAPDKD) are disordered. Basic and acidic residues predominate over residues 108 to 122 (AEEKKKQEQKAPDKD). Residues 187 to 231 (DEDERVDETALRQLTEMGFPESRASKALRLNHMSVPQAMEWLIEH) enclose the UBA 1 domain. Residues 239–273 (TPLPGHAAQAGASAAATTSSTSSEAAVGTSVEDEE) are disordered. The span at 245–268 (AAQAGASAAATTSSTSSEAAVGTS) shows a compositional bias: low complexity. Positions 292–332 (RADARAVISLMEMGFDEKEVIDALRVNNNQQNAACEWLLGD) constitute a UBA 2 domain. The region spanning 357 to 396 (NPVVQLGLTNPKTLLAFEDMLENPLNSTQWMNDPETGPVM) is the STI1 domain.

As to quaternary structure, component of the KPC complex composed of RNF123/KPC1 and UBAC1/KPC2. Interacts (via ubiquitin-like domain) with RNF123. Interacts (via ubiquitin-like and UBA domains) with the proteasome via its N-terminal domain.

It localises to the cytoplasm. The protein operates within protein modification; protein ubiquitination. Non-catalytic component of the KPC complex, a E3 ubiquitin-protein ligase complex that mediates polyubiquitination of target proteins, such as CDKN1B and NFKB1. The KPC complex catalyzes polyubiquitination and proteasome-mediated degradation of CDKN1B during G1 phase of the cell cycle. The KPC complex also acts as a key regulator of the NF-kappa-B signaling by promoting maturation of the NFKB1 component of NF-kappa-B by catalyzing ubiquitination of the NFKB1 p105 precursor. Within the KPC complex, UBAC1 acts as an adapter that promotes the transfer of target proteins that have been polyubiquitinated by RNF123/KPC1 to the 26S proteasome. The chain is Ubiquitin-associated domain-containing protein 1 (Ubac1) from Mus musculus (Mouse).